The chain runs to 1390 residues: Hepatocyte growth factor receptor (1390 aa).

An N-terminal signal peptide occupies residues 1–24 (MKAPAVLAPGILVLLFTLVQRSNG). Residues 25–932 (ECKEALAKSE…VIVQPDQNFT (908 aa)) lie on the Extracellular side of the membrane. Positions 27-515 (KEALAKSEMN…TGKKITKIPL (489 aa)) constitute a Sema domain. An N-linked (GlcNAc...) asparagine glycan is attached at Asn-45. Disulfide bonds link Cys-95/Cys-101, Cys-98/Cys-160, Cys-133/Cys-141, and Cys-172/Cys-175. Residue Asn-106 is glycosylated (N-linked (GlcNAc...) asparagine). Asn-149 is a glycosylation site (N-linked (GlcNAc...) asparagine). Asn-202 carries N-linked (GlcNAc...) asparagine glycosylation. Disulfide bonds link Cys-298–Cys-363 and Cys-385–Cys-397. N-linked (GlcNAc...) asparagine glycosylation is found at Asn-399 and Asn-405. 4 cysteine pairs are disulfide-bonded: Cys-520-Cys-538, Cys-526-Cys-561, Cys-529-Cys-545, and Cys-541-Cys-551. 3 consecutive IPT/TIG domains span residues 563–655 (PAIY…FSYV), 657–739 (PVIT…FSYR), and 742–836 (PIVY…LIYV). The O-linked (Man) threonine glycan is linked to Thr-582. N-linked (GlcNAc...) asparagine glycosylation occurs at Asn-607. Cys-610 and Cys-624 are joined by a disulfide. N-linked (GlcNAc...) asparagine glycosylation is present at Asn-635. Thr-676 carries an O-linked (Man) threonine glycan. Cys-697 and Cys-709 are disulfide-bonded. An O-linked (Man) threonine glycan is attached at Thr-761. N-linked (GlcNAc...) asparagine glycans are attached at residues Asn-785, Asn-879, and Asn-930. A helical transmembrane segment spans residues 933-955 (GLIAGVVSISTALLLLLGFFLWL). Residues 956–1390 (KKRKQIKDLG…TRPASFWETS (435 aa)) are Cytoplasmic-facing. Phosphoserine is present on Ser-966. The residue at position 977 (Thr-977) is a Phosphothreonine. Ser-990, Ser-997, and Ser-1000 each carry phosphoserine. Position 1003 is a phosphotyrosine (Tyr-1003). One can recognise a Protein kinase domain in the interval 1078–1345 (VHFNEVIGRG…RISAIFSTFI (268 aa)). ATP contacts are provided by residues 1084-1092 (IGRGHFGCV) and Lys-1110. The active-site Proton acceptor is the Asp-1204. The tract at residues 1212–1390 (LDEKFTVKVA…TRPASFWETS (179 aa)) is interaction with RANBP9. Tyr-1230 is modified (phosphotyrosine). Residues Tyr-1234 and Tyr-1235 each carry the phosphotyrosine; by autocatalysis modification. Thr-1289 is modified (phosphothreonine). Residues 1320 to 1359 (WHPKAEMRPSFSELVSRISAIFSTFIGEHYVHVNATYVNV) are interaction with MUC20. Residues Tyr-1349 and Tyr-1356 each carry the phosphotyrosine; by autocatalysis modification. A Phosphotyrosine modification is found at Tyr-1365.

The protein belongs to the protein kinase superfamily. Tyr protein kinase family. As to quaternary structure, heterodimer made of an alpha chain (50 kDa) and a beta chain (145 kDa) which are disulfide linked. Binds PLXNB1. Interacts when phosphorylated with downstream effectors including STAT3, PIK3R1, SRC, PCLG1, GRB2 and GAB1. Interacts with SPSB1, SPSB2 and SPSB4. Interacts with INPP5D/SHIP1. When phosphorylated at Tyr-1356, interacts with INPPL1/SHIP2. Interacts with RANBP9 and RANBP10, as well as SPSB1, SPSB2, SPSB3 and SPSB4. SPSB1 binding occurs in the presence and in the absence of HGF, however HGF treatment has a positive effect on this interaction. Interacts with MUC20; prevents interaction with GRB2 and suppresses hepatocyte growth factor-induced cell proliferation. Interacts with GRB10. Interacts with PTPN1 and PTPN2. Interacts with LECT2; this interaction may have an antagonistic effect on receptor activation. Interacts with HSP90AA1 and HSP90AB1; the interaction suppresses MET kinase activity. Interacts with tensin TNS3. Interacts (when phosphorylated) with tensin TNS4 (via SH2 domain); the interaction increases MET protein stability by inhibiting MET endocytosis and subsequent lysosomal degradation. (Microbial infection) Interacts via extracytoplasmic residues 25-656 with L.monocytogenes InlB; MET can bind HGF, its endogenous ligand, and InlB simultaneously. InlB probably dimerizes upon binding to MET, which encourages subsequent dimerization of MET. Autophosphorylated in response to ligand binding on Tyr-1234 and Tyr-1235 in the kinase domain leading to further phosphorylation of Tyr-1349 and Tyr-1356 in the C-terminal multifunctional docking site. Dephosphorylated by PTPRJ at Tyr-1349 and Tyr-1365. Dephosphorylated by PTPN1 and PTPN2. Post-translationally, ubiquitinated. Ubiquitination by CBL regulates MET endocytosis, resulting in decreasing plasma membrane receptor abundance, and in endosomal degradation and/or recycling of internalized receptors. In terms of processing, O-mannosylation of IPT/TIG domains by TMEM260 is required for protein maturation. O-mannosylated residues are composed of single mannose glycans that are not elongated or modified. (Microbial infection) Tyrosine phosphorylation is stimulated by L.monocytogenes InlB. Tyrosine phosphorylation is maximal 10-20 minutes after treatment with InlB and disappears by 60 minutes. The phosphorylated residues were not identified. Expressed in normal hepatocytes as well as in epithelial cells lining the stomach, the small and the large intestine. Found also in basal keratinocytes of esophagus and skin. High levels are found in liver, gastrointestinal tract, thyroid and kidney. Also present in the brain. Expressed in metaphyseal bone (at protein level).

The protein localises to the membrane. The protein resides in the secreted. The enzyme catalyses L-tyrosyl-[protein] + ATP = O-phospho-L-tyrosyl-[protein] + ADP + H(+). Its activity is regulated as follows. In its inactive state, the C-terminal tail interacts with the catalytic domain and inhibits the kinase activity. Upon ligand binding, the C-terminal tail is displaced and becomes phosphorylated, thus increasing the kinase activity. Functionally, receptor tyrosine kinase that transduces signals from the extracellular matrix into the cytoplasm by binding to hepatocyte growth factor/HGF ligand. Regulates many physiological processes including proliferation, scattering, morphogenesis and survival. Ligand binding at the cell surface induces autophosphorylation of MET on its intracellular domain that provides docking sites for downstream signaling molecules. Following activation by ligand, interacts with the PI3-kinase subunit PIK3R1, PLCG1, SRC, GRB2, STAT3 or the adapter GAB1. Recruitment of these downstream effectors by MET leads to the activation of several signaling cascades including the RAS-ERK, PI3 kinase-AKT, or PLCgamma-PKC. The RAS-ERK activation is associated with the morphogenetic effects while PI3K/AKT coordinates prosurvival effects. During embryonic development, MET signaling plays a role in gastrulation, development and migration of neuronal precursors, angiogenesis and kidney formation. During skeletal muscle development, it is crucial for the migration of muscle progenitor cells and for the proliferation of secondary myoblasts. In adults, participates in wound healing as well as organ regeneration and tissue remodeling. Also promotes differentiation and proliferation of hematopoietic cells. May regulate cortical bone osteogenesis. In terms of biological role, (Microbial infection) Acts as a receptor for Listeria monocytogenes internalin InlB, mediating entry of the pathogen into cells. The chain is Hepatocyte growth factor receptor (MET) from Homo sapiens (Human).